Consider the following 248-residue polypeptide: NH(3)-dependent NAD(+) synthetase (248 aa).

ATP is bound at residue 31-38 (GLSGGVDS). Asp-37 contributes to the Mg(2+) binding site. Residue Arg-114 participates in deamido-NAD(+) binding. Thr-134 is a binding site for ATP. Residue Glu-139 participates in Mg(2+) binding. Deamido-NAD(+)-binding residues include Lys-147 and Asp-154. ATP-binding residues include Lys-163 and Thr-185. 232–233 (HK) contacts deamido-NAD(+).

Belongs to the NAD synthetase family. Homodimer.

The catalysed reaction is deamido-NAD(+) + NH4(+) + ATP = AMP + diphosphate + NAD(+) + H(+). The protein operates within cofactor biosynthesis; NAD(+) biosynthesis; NAD(+) from deamido-NAD(+) (ammonia route): step 1/1. Functionally, catalyzes the ATP-dependent amidation of deamido-NAD to form NAD. Uses ammonia as a nitrogen source. The polypeptide is NH(3)-dependent NAD(+) synthetase (Mycoplasma pneumoniae (strain ATCC 29342 / M129 / Subtype 1) (Mycoplasmoides pneumoniae)).